A 356-amino-acid polypeptide reads, in one-letter code: tRNA N6-adenosine threonylcarbamoyltransferase (356 aa).

Positions 116 and 120 each coordinate Fe cation. Residues 139-143 (IVSGG), D174, G187, D191, and N281 each bind substrate. D309 serves as a coordination point for Fe cation.

The protein belongs to the KAE1 / TsaD family. It depends on Fe(2+) as a cofactor.

The protein resides in the cytoplasm. It catalyses the reaction L-threonylcarbamoyladenylate + adenosine(37) in tRNA = N(6)-L-threonylcarbamoyladenosine(37) in tRNA + AMP + H(+). Required for the formation of a threonylcarbamoyl group on adenosine at position 37 (t(6)A37) in tRNAs that read codons beginning with adenine. Is involved in the transfer of the threonylcarbamoyl moiety of threonylcarbamoyl-AMP (TC-AMP) to the N6 group of A37, together with TsaE and TsaB. TsaD likely plays a direct catalytic role in this reaction. This is tRNA N6-adenosine threonylcarbamoyltransferase from Frankia casuarinae (strain DSM 45818 / CECT 9043 / HFP020203 / CcI3).